The primary structure comprises 195 residues: Probable thymidylate kinase (195 aa).

7-14 (GIDGVGKT) is an ATP binding site.

This sequence belongs to the thymidylate kinase family.

The catalysed reaction is dTMP + ATP = dTDP + ADP. This is Probable thymidylate kinase from Methanosphaera stadtmanae (strain ATCC 43021 / DSM 3091 / JCM 11832 / MCB-3).